A 217-amino-acid polypeptide reads, in one-letter code: uncharacterized protein (217 aa).

Disordered stretches follow at residues 1-85 and 167-189; these read MGVK…RGNT and KLRS…EPDE. Over residues 38–48 the composition is skewed to basic and acidic residues; sequence AKSDKDKRKGS. A compositionally biased stretch (low complexity) spans 60 to 78; sequence NALPTKNLTTPPALNPLTT. A compositionally biased stretch (basic and acidic residues) spans 172–189; sequence PHKDQHNSATNKDQEPDE.

This is an uncharacterized protein from Saccharomyces cerevisiae (strain ATCC 204508 / S288c) (Baker's yeast).